Reading from the N-terminus, the 114-residue chain is U10-agatoxin-Ao1a (114 aa).

Residues 1 to 15 form the signal peptide; the sequence is MCVATCLCTFAYVLA. The propeptide occupies 16 to 32; that stretch reads KSDEGENLISKVEETQR. 5 cysteine pairs are disulfide-bonded: Cys34-Cys53, Cys41-Cys59, Cys50-Cys86, Cys52-Cys76, and Cys61-Cys74. A disordered region spans residues 95-114; it reads GSQNPSLCKDPNPRRRRHGK.

The protein belongs to the neurotoxin 04 (omega-agtx) family. 03 (type II/III omega-agtx) subfamily. In terms of tissue distribution, expressed by the venom gland.

Its subcellular location is the secreted. Inhibits voltage-gated calcium channels (Cav). The polypeptide is U10-agatoxin-Ao1a (Agelena orientalis (Funnel-web spider)).